A 637-amino-acid polypeptide reads, in one-letter code: Chaperone protein DnaK (637 aa).

Residue T196 is modified to Phosphothreonine; by autocatalysis. Disordered stretches follow at residues K484–T528 and T598–K637. Positions S501 to T528 are enriched in basic and acidic residues. The segment covering A600–S620 has biased composition (low complexity). Residues G621–K637 are compositionally biased toward basic and acidic residues.

Belongs to the heat shock protein 70 family.

Acts as a chaperone. In Chloroherpeton thalassium (strain ATCC 35110 / GB-78), this protein is Chaperone protein DnaK.